The following is a 156-amino-acid chain: Cyclic pyranopterin monophosphate synthase (156 aa).

Substrate-binding positions include 73–75 (LCH) and 110–111 (ME). Asp-125 is a catalytic residue.

This sequence belongs to the MoaC family. In terms of assembly, homohexamer; trimer of dimers.

The enzyme catalyses (8S)-3',8-cyclo-7,8-dihydroguanosine 5'-triphosphate = cyclic pyranopterin phosphate + diphosphate. The protein operates within cofactor biosynthesis; molybdopterin biosynthesis. In terms of biological role, catalyzes the conversion of (8S)-3',8-cyclo-7,8-dihydroguanosine 5'-triphosphate to cyclic pyranopterin monophosphate (cPMP). The protein is Cyclic pyranopterin monophosphate synthase of Pseudomonas putida (strain GB-1).